The sequence spans 405 residues: Imidazolonepropionase (405 aa).

2 residues coordinate Fe(3+): H70 and H72. Zn(2+) is bound by residues H70 and H72. Positions 79, 142, and 175 each coordinate 4-imidazolone-5-propanoate. Residue Y142 participates in N-formimidoyl-L-glutamate binding. Residue H240 coordinates Fe(3+). Position 240 (H240) interacts with Zn(2+). Q243 provides a ligand contact to 4-imidazolone-5-propanoate. D315 lines the Fe(3+) pocket. D315 is a binding site for Zn(2+). Residues N317 and G319 each coordinate N-formimidoyl-L-glutamate. S320 serves as a coordination point for 4-imidazolone-5-propanoate.

The protein belongs to the metallo-dependent hydrolases superfamily. HutI family. Requires Zn(2+) as cofactor. Fe(3+) serves as cofactor.

Its subcellular location is the cytoplasm. It catalyses the reaction 4-imidazolone-5-propanoate + H2O = N-formimidoyl-L-glutamate. It participates in amino-acid degradation; L-histidine degradation into L-glutamate; N-formimidoyl-L-glutamate from L-histidine: step 3/3. Catalyzes the hydrolytic cleavage of the carbon-nitrogen bond in imidazolone-5-propanoate to yield N-formimidoyl-L-glutamate. It is the third step in the universal histidine degradation pathway. The sequence is that of Imidazolonepropionase from Ruegeria sp. (strain TM1040) (Silicibacter sp.).